The sequence spans 63 residues: Large ribosomal subunit protein uL30 (63 aa).

Belongs to the universal ribosomal protein uL30 family. As to quaternary structure, part of the 50S ribosomal subunit.

This chain is Large ribosomal subunit protein uL30, found in Rickettsia africae (strain ESF-5).